A 319-amino-acid polypeptide reads, in one-letter code: Thioredoxin reductase 1 (319 aa).

Residues 11–14 (SGPA), 40–41 (IA), Gln45, Asn54, Val87, Cys145, Asp288, and 295–297 (RQA) each bind FAD. Cys142 and Cys145 form a disulfide bridge. Residue Ser303 is modified to Phosphoserine.

The protein belongs to the class-II pyridine nucleotide-disulfide oxidoreductase family. As to quaternary structure, homodimer. The cofactor is FAD.

It is found in the cytoplasm. The protein localises to the mitochondrion intermembrane space. It carries out the reaction [thioredoxin]-dithiol + NADP(+) = [thioredoxin]-disulfide + NADPH + H(+). Functionally, central component in the thioredoxin system. Reduces thioredoxins 1 and 2. The sequence is that of Thioredoxin reductase 1 (TRR1) from Saccharomyces cerevisiae (strain ATCC 204508 / S288c) (Baker's yeast).